A 432-amino-acid polypeptide reads, in one-letter code: Glutamate-1-semialdehyde 2,1-aminomutase (432 aa).

Lys272 carries the N6-(pyridoxal phosphate)lysine modification.

This sequence belongs to the class-III pyridoxal-phosphate-dependent aminotransferase family. HemL subfamily. In terms of assembly, homodimer. Requires pyridoxal 5'-phosphate as cofactor.

It is found in the cytoplasm. It catalyses the reaction (S)-4-amino-5-oxopentanoate = 5-aminolevulinate. It participates in porphyrin-containing compound metabolism; protoporphyrin-IX biosynthesis; 5-aminolevulinate from L-glutamyl-tRNA(Glu): step 2/2. Its pathway is porphyrin-containing compound metabolism; chlorophyll biosynthesis. In Nostoc sp. (strain PCC 7120 / SAG 25.82 / UTEX 2576), this protein is Glutamate-1-semialdehyde 2,1-aminomutase.